The chain runs to 479 residues: Ribulose bisphosphate carboxylase large chain (479 aa).

Residues 1-2 (MS) constitute a propeptide that is removed on maturation. Substrate is bound by residues asparagine 123 and threonine 173. Catalysis depends on lysine 175, which acts as the Proton acceptor. Residue lysine 177 coordinates substrate. Positions 201, 203, and 204 each coordinate Mg(2+). Lysine 201 is subject to N6-carboxylysine. Serine 208 is modified (phosphoserine). The active-site Proton acceptor is the histidine 294. Substrate contacts are provided by arginine 295 and histidine 327. Threonine 330 carries the phosphothreonine modification. Residue serine 379 coordinates substrate.

This sequence belongs to the RuBisCO large chain family. Type I subfamily. Heterohexadecamer of 8 large chains and 8 small chains; disulfide-linked. The disulfide link is formed within the large subunit homodimers. Mg(2+) is required as a cofactor. In terms of processing, the disulfide bond which can form in the large chain dimeric partners within the hexadecamer appears to be associated with oxidative stress and protein turnover.

It is found in the plastid. The protein localises to the chloroplast. The enzyme catalyses 2 (2R)-3-phosphoglycerate + 2 H(+) = D-ribulose 1,5-bisphosphate + CO2 + H2O. The catalysed reaction is D-ribulose 1,5-bisphosphate + O2 = 2-phosphoglycolate + (2R)-3-phosphoglycerate + 2 H(+). Its function is as follows. RuBisCO catalyzes two reactions: the carboxylation of D-ribulose 1,5-bisphosphate, the primary event in carbon dioxide fixation, as well as the oxidative fragmentation of the pentose substrate in the photorespiration process. Both reactions occur simultaneously and in competition at the same active site. This is Ribulose bisphosphate carboxylase large chain from Nasturtium officinale (Watercress).